We begin with the raw amino-acid sequence, 320 residues long: Polyadenylate-binding protein-interacting protein 13 (320 aa).

The segment at 1–44 (MAVAENVGVKVDSSNNQNIDNNTTSLVETKPSCSDDQTPKSKSS) is disordered. The segment covering 12–44 (DSSNNQNIDNNTTSLVETKPSCSDDQTPKSKSS) has biased composition (polar residues). Residues 65-75 (HLNPMAKEFVP) carry the PAM2-like motif. 2 consecutive RRM domains span residues 137–212 (RTVY…MSKT) and 234–310 (KTVY…PSKT).

In Arabidopsis thaliana (Mouse-ear cress), this protein is Polyadenylate-binding protein-interacting protein 13 (CID13).